The sequence spans 92 residues: Small ribosomal subunit protein uS19 (92 aa).

It belongs to the universal ribosomal protein uS19 family.

Functionally, protein S19 forms a complex with S13 that binds strongly to the 16S ribosomal RNA. The polypeptide is Small ribosomal subunit protein uS19 (Chelativorans sp. (strain BNC1)).